Reading from the N-terminus, the 398-residue chain is MTGQRATPQPTLDDLPLRDDLRGKSPYGAPQLAVPVRLNTNENPHPPSRALVDDVVRSVARAAADLHRYPDRDAVQLRSDLARYLTAQTGVQLGVENLWAANGSNEILQQLLQAFGGPGRSAIGFVPSYSMHPIISDGTRTEWLQAARADDFSLDVDAAVAAVTERTPDVVFVASPNNPSGQSVSLSGLRRLLDAAPGIVIVDEAYGEFSSQPSAVQLVGEYPTKLVVTRTMSKAFAFAGGRLGYLIATPAVIEAMLLVRLPYHLSSVTQAAARAALRHADDTLGSVAALIAERERVSTALTGMGFRVIPSDANFVLFGEFTDAPASWQRYLDAGVLIRDVGIPGYLRATTGLAEENDAFLRASAQLAATELAPVNVGAIASAAEPRAAGRDHVLGAP.

Positions 1–10 (MTGQRATPQP) are enriched in polar residues. The tract at residues 1 to 30 (MTGQRATPQPTLDDLPLRDDLRGKSPYGAP) is disordered. An N6-(pyridoxal phosphate)lysine modification is found at Lys234.

Belongs to the class-II pyridoxal-phosphate-dependent aminotransferase family. Histidinol-phosphate aminotransferase subfamily. As to quaternary structure, homodimer. It depends on pyridoxal 5'-phosphate as a cofactor.

The enzyme catalyses L-histidinol phosphate + 2-oxoglutarate = 3-(imidazol-4-yl)-2-oxopropyl phosphate + L-glutamate. It participates in amino-acid biosynthesis; L-histidine biosynthesis; L-histidine from 5-phospho-alpha-D-ribose 1-diphosphate: step 7/9. The chain is Histidinol-phosphate aminotransferase from Mycobacterium avium (strain 104).